The chain runs to 254 residues: Segregation and condensation protein A (254 aa).

It belongs to the ScpA family. Component of a cohesin-like complex composed of ScpA, ScpB and the Smc homodimer, in which ScpA and ScpB bind to the head domain of Smc. The presence of the three proteins is required for the association of the complex with DNA.

The protein localises to the cytoplasm. Participates in chromosomal partition during cell division. May act via the formation of a condensin-like complex containing Smc and ScpB that pull DNA away from mid-cell into both cell halves. The chain is Segregation and condensation protein A from Clostridium tetani (strain Massachusetts / E88).